The chain runs to 245 residues: RAD51-like protein 1 (245 aa).

As to quaternary structure, interacts with brc-2 and rad-51.

Its subcellular location is the nucleus. Its function is as follows. Has a role in the homologous recombination repair (HRR) of genomic DNA during meiosis. Required for rad-51 recruitment onto ssDNA gaps generated at stalled replication fork barriers. The chain is RAD51-like protein 1 (rfs-1) from Caenorhabditis elegans.